We begin with the raw amino-acid sequence, 123 residues long: Large ribosomal subunit protein uL14 (123 aa).

The protein belongs to the universal ribosomal protein uL14 family. Part of the 50S ribosomal subunit. Forms a cluster with proteins L3 and L19. In the 70S ribosome, L14 and L19 interact and together make contacts with the 16S rRNA in bridges B5 and B8.

In terms of biological role, binds to 23S rRNA. Forms part of two intersubunit bridges in the 70S ribosome. The chain is Large ribosomal subunit protein uL14 from Vibrio parahaemolyticus serotype O3:K6 (strain RIMD 2210633).